An 87-amino-acid chain; its full sequence is U3-theraphotoxin-Hhn1d (87 aa).

The N-terminal stretch at 1–24 (MVNMKASMFLTFAGLVLLFVVCYA) is a signal peptide. The propeptide occupies 25 to 52 (SESEEKEFPKEMLSSIFAVDNDFKQEER). 3 cysteine pairs are disulfide-bonded: C54–C67, C61–C72, and C66–C79.

This sequence belongs to the neurotoxin 10 (Hwtx-1) family. 51 (Hntx-8) subfamily. Hntx-8 sub-subfamily. In terms of tissue distribution, expressed by the venom gland.

Its subcellular location is the secreted. Functionally, ion channel inhibitor. The protein is U3-theraphotoxin-Hhn1d of Cyriopagopus hainanus (Chinese bird spider).